Reading from the N-terminus, the 216-residue chain is Cytidylate kinase (216 aa).

Residue Gly7–Thr15 participates in ATP binding.

This sequence belongs to the cytidylate kinase family. Type 1 subfamily.

It is found in the cytoplasm. It catalyses the reaction CMP + ATP = CDP + ADP. The enzyme catalyses dCMP + ATP = dCDP + ADP. In Chlamydia felis (strain Fe/C-56) (Chlamydophila felis), this protein is Cytidylate kinase.